Reading from the N-terminus, the 109-residue chain is Thiosulfate sulfurtransferase GlpE (109 aa).

The Rhodanese domain maps to arginine 16–alanine 104. The active-site Cysteine persulfide intermediate is the cysteine 64.

This sequence belongs to the GlpE family.

It localises to the cytoplasm. The enzyme catalyses thiosulfate + hydrogen cyanide = thiocyanate + sulfite + 2 H(+). It carries out the reaction thiosulfate + [thioredoxin]-dithiol = [thioredoxin]-disulfide + hydrogen sulfide + sulfite + 2 H(+). In terms of biological role, transferase that catalyzes the transfer of sulfur from thiosulfate to thiophilic acceptors such as cyanide or dithiols. May function in a CysM-independent thiosulfate assimilation pathway by catalyzing the conversion of thiosulfate to sulfite, which can then be used for L-cysteine biosynthesis. In Pseudomonas entomophila (strain L48), this protein is Thiosulfate sulfurtransferase GlpE.